Consider the following 348-residue polypeptide: Dihydroorotase (348 aa).

Zn(2+) is bound by residues His17 and His19. Substrate is bound by residues 19 to 21 and Asn45; that span reads HLR. The Zn(2+) site is built by Lys103, His140, and His178. N6-carboxylysine is present on Lys103. Residue His140 coordinates substrate. Leu223 contributes to the substrate binding site. Asp251 contacts Zn(2+). Asp251 is a catalytic residue. Substrate-binding residues include His255 and Ala267.

The protein belongs to the metallo-dependent hydrolases superfamily. DHOase family. Class II DHOase subfamily. Homodimer. Zn(2+) serves as cofactor.

It catalyses the reaction (S)-dihydroorotate + H2O = N-carbamoyl-L-aspartate + H(+). It functions in the pathway pyrimidine metabolism; UMP biosynthesis via de novo pathway; (S)-dihydroorotate from bicarbonate: step 3/3. Catalyzes the reversible cyclization of carbamoyl aspartate to dihydroorotate. This is Dihydroorotase from Escherichia coli (strain SMS-3-5 / SECEC).